The following is a 450-amino-acid chain: Ribulose bisphosphate carboxylase large chain (450 aa).

Lys4 is subject to N6,N6,N6-trimethyllysine. Substrate contacts are provided by Asn113 and Thr163. The active-site Proton acceptor is Lys165. Lys167 serves as a coordination point for substrate. Mg(2+) contacts are provided by Lys191, Asp193, and Glu194. Lys191 carries the post-translational modification N6-carboxylysine. His284 functions as the Proton acceptor in the catalytic mechanism. The substrate site is built by Arg285, His317, and Ser369.

It belongs to the RuBisCO large chain family. Type I subfamily. In terms of assembly, heterohexadecamer of 8 large chains and 8 small chains; disulfide-linked. The disulfide link is formed within the large subunit homodimers. It depends on Mg(2+) as a cofactor. The disulfide bond which can form in the large chain dimeric partners within the hexadecamer appears to be associated with oxidative stress and protein turnover.

The protein resides in the plastid. Its subcellular location is the chloroplast. The catalysed reaction is 2 (2R)-3-phosphoglycerate + 2 H(+) = D-ribulose 1,5-bisphosphate + CO2 + H2O. The enzyme catalyses D-ribulose 1,5-bisphosphate + O2 = 2-phosphoglycolate + (2R)-3-phosphoglycerate + 2 H(+). Its function is as follows. RuBisCO catalyzes two reactions: the carboxylation of D-ribulose 1,5-bisphosphate, the primary event in carbon dioxide fixation, as well as the oxidative fragmentation of the pentose substrate in the photorespiration process. Both reactions occur simultaneously and in competition at the same active site. In Sedum rubrotinctum (Jelly bean plant), this protein is Ribulose bisphosphate carboxylase large chain.